The sequence spans 623 residues: Putative disease resistance protein At5g47280 (623 aa).

NB-ARC domains follow at residues 2–51 (LFNL…VSQS) and 119–249 (VDPR…NMLV). 16–23 (GMIGSGKT) is a binding site for ATP. LRR repeat units follow at residues 488–511 (SLNSISITNCPNIKELPKNISKLQ), 512–534 (ALQLLRLYACPELKSLPVEICEL), 536–558 (RLVYVDISHCLSLSSLPEKIGNV), and 560–581 (TLEKIDMRECSLSSIPSSAVSL).

It belongs to the disease resistance NB-LRR family.

Potential disease resistance protein. This chain is Putative disease resistance protein At5g47280, found in Arabidopsis thaliana (Mouse-ear cress).